A 325-amino-acid chain; its full sequence is Glycerol-3-phosphate dehydrogenase [NAD(P)+] (325 aa).

NADPH-binding residues include S14, F15, R35, and K109. Positions 109 and 137 each coordinate sn-glycerol 3-phosphate. A141 contributes to the NADPH binding site. Residues K192, D247, S257, R258, and N259 each contribute to the sn-glycerol 3-phosphate site. Catalysis depends on K192, which acts as the Proton acceptor. R258 is an NADPH binding site. NADPH contacts are provided by L282 and E284.

It belongs to the NAD-dependent glycerol-3-phosphate dehydrogenase family.

It localises to the cytoplasm. The catalysed reaction is sn-glycerol 3-phosphate + NAD(+) = dihydroxyacetone phosphate + NADH + H(+). It catalyses the reaction sn-glycerol 3-phosphate + NADP(+) = dihydroxyacetone phosphate + NADPH + H(+). Its pathway is membrane lipid metabolism; glycerophospholipid metabolism. Catalyzes the reduction of the glycolytic intermediate dihydroxyacetone phosphate (DHAP) to sn-glycerol 3-phosphate (G3P), the key precursor for phospholipid synthesis. The protein is Glycerol-3-phosphate dehydrogenase [NAD(P)+] of Rickettsia conorii (strain ATCC VR-613 / Malish 7).